Reading from the N-terminus, the 757-residue chain is Subtilisin-like protease SBT1.7 (757 aa).

The signal sequence occupies residues 1–24 (MSSSFLSSTAFFLLLCLGFCHVSS). Residues 25 to 106 (SSSDQGTYIV…VLPEHRYELH (82 aa)) constitute a propeptide that is removed on maturation. Residues 31-106 (TYIVHMAKSQ…VLPEHRYELH (76 aa)) enclose the Inhibitor I9 domain. Residues 102 to 610 (RYELHTTRTP…AGHVSPTTAT (509 aa)) form the Peptidase S8 domain. The active-site Charge relay system is Asp-139. Asn-170 is a glycosylation site (N-linked (GlcNAc...) asparagine). The interval 196–219 (PIDESKESRSPRDDDGHGTHTSST) is disordered. Residues 198–213 (DESKESRSPRDDDGHG) are compositionally biased toward basic and acidic residues. Residue His-212 is the Charge relay system of the active site. N-linked (GlcNAc...) asparagine glycans are attached at residues Asn-352, Asn-376, and Asn-379. Ser-542 acts as the Charge relay system in catalysis. N-linked (GlcNAc...) asparagine glycosylation is found at Asn-631 and Asn-644.

It belongs to the peptidase S8 family. As to expression, expressed in immature siliques and at lower levels in stems and flowers. Widely expressed at low levels.

The protein resides in the secreted. It localises to the cell wall. Its activity is regulated as follows. Activated by calcium. Inhibited by the serine protease inhibitors 4-(2-aminoethyl)benzenesulphonyl fluoride (AEBSF), PMSF, di-isopropyl phosphofluoridate (DFP) and soybean trypsin inhibitor (SBTI). Not inhibited by benzamidine or iodoacetamide. Leupeptin and pepstatin A have a minor inhibitory action. In terms of biological role, serine protease. Has a substrate preference for the hydrophobic residues Phe and Ala and the basic residue Asp in the P1 position, and for Asp, Leu or Ala in the P1' position. Essential for mucilage release from seed coats. Triggers the accumulation and/or activation of cell wall modifying enzymes necessary either for the loosening of the outer primary cell wall, or to facilitate swelling of the mucilage. This is Subtilisin-like protease SBT1.7 from Arabidopsis thaliana (Mouse-ear cress).